A 642-amino-acid chain; its full sequence is tRNA uridine 5-carboxymethylaminomethyl modification enzyme MnmG (642 aa).

FAD contacts are provided by residues 12–17 (GAGHAG), V124, and S179. An NAD(+)-binding site is contributed by 272 to 286 (GPRYCPSIEDKITRF). Q369 provides a ligand contact to FAD.

The protein belongs to the MnmG family. In terms of assembly, homodimer. Heterotetramer of two MnmE and two MnmG subunits. It depends on FAD as a cofactor.

It is found in the cytoplasm. In terms of biological role, NAD-binding protein involved in the addition of a carboxymethylaminomethyl (cmnm) group at the wobble position (U34) of certain tRNAs, forming tRNA-cmnm(5)s(2)U34. This Bdellovibrio bacteriovorus (strain ATCC 15356 / DSM 50701 / NCIMB 9529 / HD100) protein is tRNA uridine 5-carboxymethylaminomethyl modification enzyme MnmG.